An 85-amino-acid polypeptide reads, in one-letter code: Large ribosomal subunit protein bL27 (85 aa).

The interval 1 to 25 (MAHKKAGGSSRNGRDSHSKRLGVKH) is disordered.

The protein belongs to the bacterial ribosomal protein bL27 family.

The sequence is that of Large ribosomal subunit protein bL27 from Buchnera aphidicola subsp. Baizongia pistaciae (strain Bp).